The chain runs to 588 residues: Glutamyl-tRNA(Gln) amidotransferase subunit B, mitochondrial (588 aa).

The N-terminal 109 residues, 1–109 (MLRSWIGSGT…RAPTSTSETP (109 aa)), are a transit peptide targeting the mitochondrion. The span at 22–35 (SSLPSPKASFSSAP) shows a compositional bias: low complexity. The interval 22 to 50 (SSLPSPKASFSSAPNRYLQPPTSADRVPL) is disordered.

Belongs to the GatB/GatE family. GatB subfamily. In terms of assembly, subunit of the heterotrimeric GatCAB amidotransferase (AdT) complex, composed of A, B and C subunits.

The protein localises to the mitochondrion. It catalyses the reaction L-glutamyl-tRNA(Gln) + L-glutamine + ATP + H2O = L-glutaminyl-tRNA(Gln) + L-glutamate + ADP + phosphate + H(+). In terms of biological role, allows the formation of correctly charged Gln-tRNA(Gln) through the transamidation of misacylated Glu-tRNA(Gln) in the mitochondria. The reaction takes place in the presence of glutamine and ATP through an activated gamma-phospho-Glu-tRNA(Gln). The sequence is that of Glutamyl-tRNA(Gln) amidotransferase subunit B, mitochondrial from Penicillium rubens (strain ATCC 28089 / DSM 1075 / NRRL 1951 / Wisconsin 54-1255) (Penicillium chrysogenum).